Reading from the N-terminus, the 86-residue chain is MANHKSCEKRARQTVVKTERNRFYKTRIKNVTKSVLSAVELADKEKAVEAMKAANQYFHHCVSKGILKKGTASRKVSRLQLKVNAI.

It belongs to the bacterial ribosomal protein bS20 family.

Functionally, binds directly to 16S ribosomal RNA. The protein is Small ribosomal subunit protein bS20 of Aliarcobacter butzleri (strain RM4018) (Arcobacter butzleri).